The chain runs to 88 residues: UPF0367 protein AM1_1885 (88 aa).

Belongs to the UPF0367 family.

This is UPF0367 protein AM1_1885 from Acaryochloris marina (strain MBIC 11017).